We begin with the raw amino-acid sequence, 299 residues long: GTPase Era (299 aa).

Residues 5–172 enclose the Era-type G domain; that stretch reads KSGFVSIIGR…IDVLKTYLPE (168 aa). The G1 stretch occupies residues 13–20; sequence GRPNVGKS. 13-20 is a binding site for GTP; that stretch reads GRPNVGKS. Positions 39-43 are G2; it reads QTTRN. Residues 60-63 form a G3 region; that stretch reads DTPG. GTP contacts are provided by residues 60–64 and 122–125; these read DTPGI and NKID. The G4 stretch occupies residues 122–125; sequence NKID. The segment at 151–153 is G5; it reads ISA. The 78-residue stretch at 203 to 280 folds into the KH type-2 domain; that stretch reads TSEEIPHAIG…YLELWVKVQR (78 aa).

Belongs to the TRAFAC class TrmE-Era-EngA-EngB-Septin-like GTPase superfamily. Era GTPase family. Monomer.

It is found in the cytoplasm. Its subcellular location is the cell membrane. In terms of biological role, an essential GTPase that binds both GDP and GTP, with rapid nucleotide exchange. Plays a role in 16S rRNA processing and 30S ribosomal subunit biogenesis and possibly also in cell cycle regulation and energy metabolism. The polypeptide is GTPase Era (Staphylococcus aureus (strain bovine RF122 / ET3-1)).